Here is a 1555-residue protein sequence, read N- to C-terminus: Bromodomain adjacent to zinc finger domain protein 1A (1555 aa).

Residues 1-128 (MPLLHRKPFV…EETVEVIRNN (128 aa)) form a required for association with the CHRAC1/POLE3 complex region. A required for interaction with the CHRAC1-POLE3 heterodimer. Required for interaction with the CHRAC1-POLE3 heterodimer region spans residues 1–128 (MPLLHRKPFV…EETVEVIRNN (128 aa)). The segment at 1-133 (MPLLHRKPFV…VIRNNGTRLQ (133 aa)) is required for interaction with NCOR1. In terms of domain architecture, WAC spans 22–128 (EEVFYCKVTN…EETVEVIRNN (107 aa)). 2 positions are modified to phosphoserine: Ser-270 and Ser-284. The 67-residue stretch at 422 to 488 (PEVFGDALMV…LTAIFQAMAE (67 aa)) folds into the DDT domain. A coiled-coil region spans residues 635–701 (IEDYVDVLRQ…EDEQRNSAAV (67 aa)). Basic and acidic residues-rich tracts occupy residues 652–664 (LKAE…REAT) and 671–696 (RKEE…DEQR). Residues 652 to 751 (LKAEQHRKER…KRSRRGKVGQ (100 aa)) are disordered. An interaction with SMARCA5 region spans residues 668–935 (IRRRKEEKLK…QEKSRICAQL (268 aa)). Residues 668-935 (IRRRKEEKLK…QEKSRICAQL (268 aa)) are required for interaction with SMARCA5 and formation of the CHRAC ISWI chromatin remodeling complex. Composition is skewed to acidic residues over residues 705 to 714 (GEEEREDFDT) and 728 to 737 (PDVVTEDEDD). Thr-732 is subject to Phosphothreonine. A coiled-coil region spans residues 773–798 (SADAEEALRQEQQQKEKELLDKIQSA). Disordered regions lie at residues 843–874 (PSSF…SSLD) and 944–969 (HFSD…CDIS). Low complexity predominate over residues 864-873 (SFLSESTSSL). A Glycyl lysine isopeptide (Lys-Gly) (interchain with G-Cter in SUMO2) cross-link involves residue Lys-954. Phosphoserine occurs at positions 962 and 963. A PHD-type zinc finger spans residues 1149–1199 (NARCKICRKKGDAENMVLCDGCDRGHHTYCVRPKLKAVPDGDWFCPECRPK). Residues 1203 to 1429 (RRLSSRQRPS…LNRRSSGRQG (227 aa)) form a disordered region. A compositionally biased stretch (acidic residues) spans 1214-1258 (ESDEEMEEGMEDDDDEVDDDDEEGQSEEEEYEVEQDEEDSDDDEA). Residues 1263-1277 (KRGRPQVRLPIKTKG) are compositionally biased toward basic residues. Ser-1282 carries the phosphoserine modification. Residues 1297–1313 (SRSQQSTPKNTAKSASK) show a composition bias toward polar residues. A phosphoserine mark is found at Ser-1320, Ser-1339, Ser-1352, Ser-1370, Ser-1401, Ser-1412, and Ser-1416. Positions 1369–1386 (HSPSFTNFRVSTSRSSRQ) are enriched in polar residues. The Bromo domain occupies 1429–1532 (GGVHELSAFE…AFFHIQAQKL (104 aa)). Thr-1546 carries the post-translational modification Phosphothreonine.

Belongs to the WAL family. As to quaternary structure, component of the ACF-1 ISWI chromatin remodeling complex at least composed of SMARCA1 and BAZ1A, which regulates the spacing of histone octamers on the DNA template to facilitate access to DNA. Within the ACF-1 ISWI chromatin remodeling complex interacts with SMARCA1; the interaction is direct. Component of the ACF-5 ISWI chromatin remodeling complex (also called the ACF complex) at least composed of BAZ1A and SMARCA5/SNF2H, which regulates the spacing of histone octamers on the DNA template to facilitate access to DNA. Within the ACF-5 ISWI chromatin remodeling complex interacts with SMARCA5/SNF2H; the interaction is direct. Component of the CHRAC ISWI chromatin remodeling complex at least composed of SMARCA5/SNF2H, BAZ1A/ACF1, CHRAC1 and POLE3; the complex preferentially binds DNA through the CHRAC1-POLE3 heterodimer and possesses ATP-dependent nucleosome-remodeling activity. Within the complex interacts (via N-terminus) with POLE3-CHRAC1 heterodimer; the interaction is direct and is required for the complex to preferentially bind to DNA. Within the complex interacts with SMARCA5/SNF2H; the interaction is direct and promotes the interaction with the POLE3-CHRAC1 heterodimer. Interacts with NCOR1 (via its RD1 domain); the interaction corepresses a number of NCOR1-regulated genes.

The protein resides in the nucleus. Regulatory subunit of the ATP-dependent ACF-1 and ACF-5 ISWI chromatin remodeling complexes, which form ordered nucleosome arrays on chromatin and slide edge- and center-positioned histone octamers away from their original location on the DNA template to facilitate access to DNA during DNA-templated processes such as DNA replication, transcription, and repair. Both complexes regulate the spacing of nucleosomes along the chromatin and have the ability to slide mononucleosomes to the center of a DNA template in an ATP-dependent manner. The ACF-1 ISWI chromatin remodeling complex has a lower ATP hydrolysis rate than the ACF-5 ISWI chromatin remodeling complex. Has a role in sensing the length of DNA which flank nucleosomes, which modulates the nucleosome spacing activity of the ACF-5 ISWI chromatin remodeling complex. Involved in DNA replication and together with SMARCA5/SNF2H is required for replication of pericentric heterochromatin in S-phase. May have a role in nuclear receptor-mediated transcription repression. This chain is Bromodomain adjacent to zinc finger domain protein 1A (Baz1a), found in Mus musculus (Mouse).